A 269-amino-acid chain; its full sequence is Ubiquinone/menaquinone biosynthesis C-methyltransferase UbiE (269 aa).

S-adenosyl-L-methionine-binding positions include threonine 92, aspartate 113, and 141–142; that span reads NA.

It belongs to the class I-like SAM-binding methyltransferase superfamily. MenG/UbiE family.

The enzyme catalyses a 2-demethylmenaquinol + S-adenosyl-L-methionine = a menaquinol + S-adenosyl-L-homocysteine + H(+). The catalysed reaction is a 2-methoxy-6-(all-trans-polyprenyl)benzene-1,4-diol + S-adenosyl-L-methionine = a 5-methoxy-2-methyl-3-(all-trans-polyprenyl)benzene-1,4-diol + S-adenosyl-L-homocysteine + H(+). It functions in the pathway quinol/quinone metabolism; menaquinone biosynthesis; menaquinol from 1,4-dihydroxy-2-naphthoate: step 2/2. It participates in cofactor biosynthesis; ubiquinone biosynthesis. In terms of biological role, methyltransferase required for the conversion of demethylmenaquinol (DMKH2) to menaquinol (MKH2) and the conversion of 2-polyprenyl-6-methoxy-1,4-benzoquinol (DDMQH2) to 2-polyprenyl-3-methyl-6-methoxy-1,4-benzoquinol (DMQH2). The protein is Ubiquinone/menaquinone biosynthesis C-methyltransferase UbiE of Brucella suis biovar 1 (strain 1330).